A 406-amino-acid polypeptide reads, in one-letter code: Pyridinium-3,5-bisthiocarboxylic acid mononucleotide nickel insertion protein (406 aa).

This sequence belongs to the LarC family.

The enzyme catalyses Ni(II)-pyridinium-3,5-bisthiocarboxylate mononucleotide = pyridinium-3,5-bisthiocarboxylate mononucleotide + Ni(2+). In terms of biological role, involved in the biosynthesis of a nickel-pincer cofactor ((SCS)Ni(II) pincer complex). Binds Ni(2+), and functions in nickel delivery to pyridinium-3,5-bisthiocarboxylic acid mononucleotide (P2TMN), to form the mature cofactor. Is thus probably required for the activation of nickel-pincer cofactor-dependent enzymes. This Akkermansia muciniphila (strain ATCC BAA-835 / DSM 22959 / JCM 33894 / BCRC 81048 / CCUG 64013 / CIP 107961 / Muc) protein is Pyridinium-3,5-bisthiocarboxylic acid mononucleotide nickel insertion protein.